The sequence spans 92 residues: Small ribosomal subunit protein uS19 (92 aa).

The protein belongs to the universal ribosomal protein uS19 family.

In terms of biological role, protein S19 forms a complex with S13 that binds strongly to the 16S ribosomal RNA. This Nitrobacter hamburgensis (strain DSM 10229 / NCIMB 13809 / X14) protein is Small ribosomal subunit protein uS19.